The sequence spans 159 residues: Small ribosomal subunit protein uS17 (159 aa).

The protein belongs to the universal ribosomal protein uS17 family.

The protein localises to the cytoplasm. This is Small ribosomal subunit protein uS17 (RPS11) from Zea mays (Maize).